The following is a 133-amino-acid chain: MITLFLSPSCTSCRKAKAWLEKHKVPFVEHNIMTSPLTRKELQHILSLTENGTDDIISTRSKIFQKLNIDVESISVSELLHLIEQYPSLLRRPIIIDAKRMQIGFNEDEIRAFLPRSYRKQELKEARMRAGIS.

Cys10 and Cys13 are joined by a disulfide.

This sequence belongs to the ArsC family. Spx subfamily. In terms of assembly, interacts with the C-terminal domain of the alpha subunit of the RNAP.

The protein resides in the cytoplasm. In terms of biological role, global transcriptional regulator that plays a key role in stress response and exerts either positive or negative regulation of genes. Acts by interacting with the C-terminal domain of the alpha subunit of the RNA polymerase (RNAP). This interaction can enhance binding of RNAP to the promoter region of target genes and stimulate their transcription, or block interaction of RNAP with activator. This chain is Global transcriptional regulator Spx, found in Streptococcus pneumoniae serotype 4 (strain ATCC BAA-334 / TIGR4).